A 148-amino-acid polypeptide reads, in one-letter code: MNIIETLEAEQAAKLLAKRPIPAFQPGDTVIVNVKVKEGERTRVQAYEGVCIARNGGGLNESFTVRKISYGEGVERVFPIYSPNIDSIKVVRRGKVRRAKLYYLRDRRGKAARIAEKMETPAAKAAREAAKKEAKAAAKAKKAASAAE.

The protein belongs to the bacterial ribosomal protein bL19 family.

In terms of biological role, this protein is located at the 30S-50S ribosomal subunit interface and may play a role in the structure and function of the aminoacyl-tRNA binding site. The chain is Large ribosomal subunit protein bL19 from Beijerinckia indica subsp. indica (strain ATCC 9039 / DSM 1715 / NCIMB 8712).